A 200-amino-acid chain; its full sequence is Large ribosomal subunit protein uL4 (200 aa).

The tract at residues 43-71 is disordered; it reads RAQKTRAEVSGSGKKPWRQKGTGRARSGD.

It belongs to the universal ribosomal protein uL4 family. In terms of assembly, part of the 50S ribosomal subunit.

Functionally, one of the primary rRNA binding proteins, this protein initially binds near the 5'-end of the 23S rRNA. It is important during the early stages of 50S assembly. It makes multiple contacts with different domains of the 23S rRNA in the assembled 50S subunit and ribosome. In terms of biological role, forms part of the polypeptide exit tunnel. This chain is Large ribosomal subunit protein uL4, found in Histophilus somni (strain 129Pt) (Haemophilus somnus).